We begin with the raw amino-acid sequence, 294 residues long: MASLKDLRNRIASVKATQKITKAMQMVAAAKLRRAQEAAEAARPYAERMDRVLANLATGMTGRSDAPALLAGTGSDQVHLVIVATADRGLCGGFNSSIVRLARQHINKLVGEGKTVKILTVGRKGRDALKRDHASRIVKSYEFTGIRHIGFEQAEDISRTVIDLFEAGEFDVATIFYSKFVNVVSQIPTAQQLIPASVPADAGGSVDLGGAVYEYEPDEGEILKDILPRNLSVQIFRALLENVAGEFGAKMSAMDNATRNAGDMIKKLNITYNRSRQAMITKELIEIISGAEAL.

This sequence belongs to the ATPase gamma chain family. F-type ATPases have 2 components, CF(1) - the catalytic core - and CF(0) - the membrane proton channel. CF(1) has five subunits: alpha(3), beta(3), gamma(1), delta(1), epsilon(1). CF(0) has three main subunits: a, b and c.

Its subcellular location is the cell inner membrane. Its function is as follows. Produces ATP from ADP in the presence of a proton gradient across the membrane. The gamma chain is believed to be important in regulating ATPase activity and the flow of protons through the CF(0) complex. In Parvibaculum lavamentivorans (strain DS-1 / DSM 13023 / NCIMB 13966), this protein is ATP synthase gamma chain.